Reading from the N-terminus, the 803-residue chain is Isoamylase 1, chloroplastic (803 aa).

The transit peptide at 1-54 (MASLPHCLSARPLVVAAAPGRPGPGPGPWLRGGARRRNAAFSAGNAGRRVGLRR) directs the protein to the chloroplast. Asp432 serves as the catalytic Nucleophile. Glu488 serves as the catalytic Proton donor.

This sequence belongs to the glycosyl hydrolase 13 family. Forms a homo-pentamer and a hetero-hexamer composed of five ISA1 and one ISA2. Interacts with FLO6/SIP4. Highly expressed in developing endosperm. Expressed at low levels in leaves.

It is found in the plastid. It localises to the chloroplast. It carries out the reaction Hydrolysis of (1-&gt;6)-alpha-D-glucosidic branch linkages in glycogen, amylopectin and their beta-limit dextrins.. The protein operates within glycan biosynthesis; starch biosynthesis. With respect to regulation, inhibited by copper chloride, mercury chloride, ammonium molybdate and para-chloromercuribenzoate. Its function is as follows. Starch-debranching enzyme involved in amylopectin biosynthesis in endosperm. Functions by removing excess branches or improper branches that interfere with the formation of double helices of the cluster chains of amylopectin and crystallization of starch. Works as ISA1 homooligomer or together with ISA2 as heterooligomer. The heterooligomer ISA1 and ISA2 possesses higher affinity than the ISA1 homooligomer for various branched polyglucans in vitro, but no marked differences exist in chain preferences for debranching of amylopectin and phytoglycogen between these forms. This is Isoamylase 1, chloroplastic from Oryza sativa subsp. japonica (Rice).